The primary structure comprises 63 residues: MFHLVDFQVTIAEILIIIMRTFRIAIWNLDVIISSIVRQLFKPLTKKNYSELDDEEPMELDYP.

The critical for disrupting nuclear import stretch occupies residues 54–63; sequence DEEPMELDYP.

It belongs to the coronaviruses accessory protein 6 family. As to quaternary structure, may interact with nsp8. Interacts with protein ORF9b. Interacts with host RAE1 in NUP98-RAE1 complex; the interaction disrupts the host nuclear import. Interacts with host KPNA2.

It localises to the host endoplasmic reticulum membrane. The protein resides in the host Golgi apparatus membrane. It is found in the host cytoplasm. Functionally, disrupts bidirectional nucleocytoplasmic transport by interacting with host RAE1-NUP98 complex. Disrupts cell nuclear import complex formation also by tethering karyopherin alpha 2 and karyopherin beta 1 to the membrane. Retention of import factors at the ER/Golgi membrane leads to a loss of transport into the nucleus. Thereby prevents STAT1 nuclear translocation in response to interferon signaling, thus blocking the expression of interferon stimulated genes (ISGs) that display multiple antiviral activities. This Homo sapiens (Human) protein is ORF6 protein.